Consider the following 465-residue polypeptide: MAAPTNTLLIEGTFSELAEELAHYVDTIRKTQTEGSVHAEIAPALDKLREQEQSEEEPKPAQQQQILKERDEVLKKLVVASAALNAAPEKEITAAYNLVIHLVRQSSNPGMFLPRICAFLAKPFPSSPQHGPSIALSILSTIFNTLAPSDNSRYHVFLAILAVIRTTSSVMAFEALKTQLKNQLSSWIATWNLDEEDVEKLHLAVADAAKKAGDEEMSYNHVILALQAIPPSEASSNEARELAVRALISALTYPFVFDFTPLTSSDAIQNLRSAEPSLFELLEIFASDTLDAYEEFIKSTPLSSMHNLAESAEILQNKMRVLTLASLAASTPSRSLPYDSISNALRIPREDVEKWVIDTIRAGLVEGKLSQLKGEFLVHRATYRVFGERQWAEVQGRLMVWRRSLENVLGVIHSEKEKFVREGIAAANAAAESGREGGARGGAGERRRGGGGHQGPREVDLVGGD.

One can recognise a PCI domain in the interval 215–383 (EEMSYNHVIL…GEFLVHRATY (169 aa)). Positions 429–465 (AAAESGREGGARGGAGERRRGGGGHQGPREVDLVGGD) are disordered. Basic and acidic residues-rich tracts occupy residues 433 to 448 (SGRE…ERRR) and 455 to 465 (GPREVDLVGGD).

It belongs to the eIF-3 subunit M family. Component of the eukaryotic translation initiation factor 3 (eIF-3) complex.

Its subcellular location is the cytoplasm. Component of the eukaryotic translation initiation factor 3 (eIF-3) complex, which is involved in protein synthesis of a specialized repertoire of mRNAs and, together with other initiation factors, stimulates binding of mRNA and methionyl-tRNAi to the 40S ribosome. The eIF-3 complex specifically targets and initiates translation of a subset of mRNAs involved in cell proliferation. In Coccidioides immitis (strain RS) (Valley fever fungus), this protein is Eukaryotic translation initiation factor 3 subunit M.